The chain runs to 490 residues: Vacuolar amino acid transporter 7 (490 aa).

The Cytoplasmic segment spans residues 1–6; that stretch reads MEATSS. A helical transmembrane segment spans residues 7 to 27; it reads ALSSTANLVKTIVGAGTLAIP. Residues 28–34 are Vacuolar-facing; sequence YSFKSDG. A helical transmembrane segment spans residues 35-55; sequence VLVGVILTLLAAVTSGLGLFV. Residues 56–84 lie on the Cytoplasmic side of the membrane; that stretch reads LSKCSKTLINPRNSSFFTLCMLTYPTLAP. Residues 85 to 105 traverse the membrane as a helical segment; it reads IFDLAMIVQCFGVGLSYLVLI. Residues 106–108 are Vacuolar-facing; the sequence is GDL. The helical transmembrane segment at 109–129 threads the bilayer; it reads FPGLFGGERNYWIIASAVIII. The Cytoplasmic segment spans residues 130–143; sequence PLCLVKKLDQLKYS. Residues 144–164 traverse the membrane as a helical segment; the sequence is SILGLFALAYISILVFSHFVF. Over 165 to 190 the chain is Vacuolar; the sequence is ELGKGELTNILRNDICWWKIHDFKGL. Residues 191–211 traverse the membrane as a helical segment; it reads LSTFSIIIFAFTGSMNLFPMI. Residues 212–221 lie on the Cytoplasmic side of the membrane; it reads NELKDNSMEN. The helical transmembrane segment at 222 to 242 threads the bilayer; that stretch reads ITFVINNSISLSTALFLIVGL. Residues 243–264 lie on the Vacuolar side of the membrane; it reads SGYLTFGNETLGNLMLNYDPNS. A helical membrane pass occupies residues 265 to 285; sequence IWIVIGKFCLGSMLILSFPLL. The Cytoplasmic portion of the chain corresponds to 286–397; the sequence is FHPLRIAVNN…FVKSRFYWIT (112 aa). Residues 355 to 374 form a disordered region; it reads NGNFDNGSIESQENNNDERG. Residues 357–368 show a composition bias toward polar residues; sequence NFDNGSIESQEN. A helical membrane pass occupies residues 398-418; that stretch reads ALLLISMYTLALSVQSFALVL. At 419–428 the chain is on the vacuolar side; that stretch reads SFVGATGSTS. A helical transmembrane segment spans residues 429 to 449; that stretch reads ISFTLPGLLGYKLIGLDSLAI. The Cytoplasmic segment spans residues 450–463; sequence GKMIPPKDRFYKRC. A helical membrane pass occupies residues 464 to 484; sequence SLLLVFYGLSVMFLSLYVTVF. The Vacuolar portion of the chain corresponds to 485–490; it reads NRSDEA.

Belongs to the amino acid/polyamine transporter 2 family.

It is found in the vacuole membrane. In terms of biological role, probable amino acid transporter of unknown specificity. In Saccharomyces cerevisiae (strain ATCC 204508 / S288c) (Baker's yeast), this protein is Vacuolar amino acid transporter 7 (AVT7).